The chain runs to 74 residues: Translational regulator CsrA (74 aa).

This sequence belongs to the CsrA/RsmA family. As to quaternary structure, homodimer; the beta-strands of each monomer intercalate to form a hydrophobic core, while the alpha-helices form wings that extend away from the core.

It is found in the cytoplasm. Functionally, a translational regulator that binds mRNA to regulate translation initiation and/or mRNA stability. Usually binds in the 5'-UTR at or near the Shine-Dalgarno sequence preventing ribosome-binding, thus repressing translation. Its main target seems to be the major flagellin gene, while its function is anatagonized by FliW. This chain is Translational regulator CsrA, found in Alkaliphilus oremlandii (strain OhILAs) (Clostridium oremlandii (strain OhILAs)).